We begin with the raw amino-acid sequence, 263 residues long: Cell division coordinator CpoB (263 aa).

A signal peptide spans 1–26 (MSSNFRHQLLSLSLLVGIAAPWAAFA). Residues 44-88 (QLERISNAHSQLLTQLQQQLSDNQSDIDSLRGQIQENQYQLNQVV) are a coiled coil. Over residues 106 to 123 (AAAQSTSGDQSGAAASTT) the composition is skewed to low complexity. Residues 106 to 139 (AAAQSTSGDQSGAAASTTPTADAGTANAGAPVKS) form a disordered region. 3 TPR repeats span residues 143-176 (NTDYNAAIALVQDKSRQDDAMVAFQNFIKNYPDS), 180-213 (PNANYWLGQLNYNKGKKDDAAYYFASVVKNYPKS), and 217-250 (ADAMFKVGVIMQDKGDTAKAKAVYQQVISKYPGT).

It belongs to the CpoB family. As to quaternary structure, homotrimer. Interacts directly with the central domain of TolA and with PBP1B. Binding to TolA disrupts the homotrimer to form a YbgF/TolA heterodimer with weak affinity. Forms a quaternary complex with PBP1B-LpoB and TolA.

It is found in the periplasm. Its function is as follows. Mediates coordination of peptidoglycan synthesis and outer membrane constriction during cell division. Promotes physical and functional coordination of the PBP1B-LpoB and Tol machines, and regulates PBP1B activity in response to Tol energy state. The sequence is that of Cell division coordinator CpoB from Escherichia coli (strain K12).